Reading from the N-terminus, the 629-residue chain is Protein fem-1 homolog B (629 aa).

ANK repeat units follow at residues 47–77 (QRST…DVQQ), 89–118 (DGAT…NVNH), 122–151 (TNST…NISI), 155–184 (YDNT…DPNA), 188–217 (CGAT…AMVV), and 220–250 (HGMT…DAKS). The TPR repeat unit spans residues 346 to 379 (SHPIIYRGAVYADNMQFEQCIKLWLHALQLRQKG). ANK repeat units lie at residues 485 to 529 (EGGS…NVNA) and 533 to 570 (MGNS…HTDM).

The protein belongs to the fem-1 family. In terms of assembly, component of a CRL2 E3 ubiquitin-protein ligase complex, also named ECS (Elongin BC-CUL2/5-SOCS-box protein) complex.

Its subcellular location is the cytoplasm. It is found in the nucleus. Its pathway is protein modification; protein ubiquitination. Functionally, substrate-recognition component of a Cul2-RING (CRL2) E3 ubiquitin-protein ligase complex of the DesCEND (destruction via C-end degrons) pathway, which recognizes a C-degron located at the extreme C terminus of target proteins, leading to their ubiquitination and degradation. The C-degron recognized by the DesCEND pathway is usually a motif of less than ten residues and can be present in full-length proteins, truncated proteins or proteolytically cleaved forms. The CRL2(FEM1B) complex specifically recognizes proteins ending with -Gly-Leu-Asp-Arg, leading to their ubiquitination and degradation. This is Protein fem-1 homolog B from Xenopus laevis (African clawed frog).